Reading from the N-terminus, the 405-residue chain is Polyketide biosynthesis cytochrome P450 PksS (405 aa).

A helical membrane pass occupies residues 231–251 (LYSMLFLLVVAGLETTVNLLG). Heme is bound at residue Cys-352.

Belongs to the cytochrome P450 family.

It localises to the cell membrane. It functions in the pathway antibiotic biosynthesis; bacillaene biosynthesis. Involved in the metabolism of the antibiotic polyketide bacillaene which is involved in secondary metabolism. The substrate is dihydrobacillaene. In Bacillus subtilis (strain 168), this protein is Polyketide biosynthesis cytochrome P450 PksS (pksS).